The following is a 151-amino-acid chain: Phosphoribosyl-AMP cyclohydrolase (151 aa).

Mg(2+) is bound at residue D94. C95 is a Zn(2+) binding site. Mg(2+) is bound by residues D96 and D98. Zn(2+) is bound by residues C112 and C119.

The protein belongs to the PRA-CH family. In terms of assembly, homodimer. Mg(2+) is required as a cofactor. Zn(2+) serves as cofactor.

It localises to the cytoplasm. The enzyme catalyses 1-(5-phospho-beta-D-ribosyl)-5'-AMP + H2O = 1-(5-phospho-beta-D-ribosyl)-5-[(5-phospho-beta-D-ribosylamino)methylideneamino]imidazole-4-carboxamide. It participates in amino-acid biosynthesis; L-histidine biosynthesis; L-histidine from 5-phospho-alpha-D-ribose 1-diphosphate: step 3/9. Its function is as follows. Catalyzes the hydrolysis of the adenine ring of phosphoribosyl-AMP. In Rhodopseudomonas palustris (strain ATCC BAA-98 / CGA009), this protein is Phosphoribosyl-AMP cyclohydrolase.